We begin with the raw amino-acid sequence, 1250 residues long: MRRGGWRKRAENDGWETWGGYMAAKVQKLEEQFRSDAAMQKDGTSSTIFSGVAIYVNGYTDPSAEELRKLMMLHGGQYHVYYSRSKTTHIIATNLPNAKIKELKGEKVIRPEWIVESIKAGRLLSYIPYQLYTKQSSVQKGLSFNPICRPEDPLPGPSNIAKQLNNRVNHIVKKIETENEVKVNGMNSWNEEDENNDFSFVDLEQTSPGRKQNGIPHPRGSTAIFNGHTPSSNGALKTQDCLVPMVNSVASRLSPASSQEEDKAEKSSTDFRDCTLQQLQQSTRNTDALRNPHRTNSFSLSPLHSNTKINGAHHSTVQGPSSTKSTSSVSTFSKAAPSVPSKPSDCNFISNFYSHSRLHHISMWKCELTEFVNTLQRQSNGIFPGREKLKKMKTGRSALVVTDTGDMSLLNSPRHQSCIMHVDMDCFFVSVGIRNRPDLKGKPVAVTSNRGTGRAPLRPGANPQLEWQYYQNKILKGKADIPDSSLWENPDSAQADGSDSVLSRAEIASCSYEARQLGIKNGMFFGHAKQLCPNLQAVPYDFHAYKEVARTLYETLASYTHNIEAVSCDEALVDITEILAETKLTPDEFANAVRMEIKDQTKCTASVGIGSNILLARMATRKAKPDGQYHLKPEEVDDFIRGQLVTNLPGVGHSMESKLASLGIKTCGDLQYMTMAKLQKEFGPKTGQMLYRFCRGLDDRPVRTEKERKSVSAEINYGIRFTQPKEAEAFLLSLSEEIQRRLEATGMKGKRLTLKIMVRKPGAPVETAKFGGHGICDNIARTVTLDQATDNAKIIGKAMLNMFHTMKLNISDMRGVGIHVNQLVPTNLNPSTCPSRPSVQSSHFPGGSYSVRDVFQVQKAKKSTEEEHKEVFRAAVDLEISPVSRTCTFLPPFPAHLPTSPDTNKAESSGKWNGLHSPVSVQSRLNLSIEVPSPSQLDQSVLEALLPDLREQVEQVCAVQQAESHGDKKKEPVNGCNTGILPQPVGTVLLQIPEPQESNSDTGINVIALPAFSQVDPEVFAALPAELQRELKAAYDQRQRQDENSTHQQSASASVPKNPLLHLKAAVKEKKRNKKKKTIGSPKRIQSPLKNRLLNSPAKTLPGACGSPQKLIDGFLKHEGPPAEKPLEELSASTSGVPGLSSLQSDPAGCVRPPAPNLAGAVEFNDVKTLLREWITTISDPMEEDILQVVKYCTDLIEEKDLEKLDLVIKYMKRLMQQSVESVWNMAFDFILDNVQVVLQQTYGSTLKVT.

A BRCT domain is found at 44–131 (TSSTIFSGVA…RLLSYIPYQL (88 aa)). Disordered stretches follow at residues 204–236 (EQTS…NGAL) and 252–329 (RLSP…TSSV). The segment covering 260–273 (EEDKAEKSSTDFRD) has biased composition (basic and acidic residues). The span at 275–320 (TLQQLQQSTRNTDALRNPHRTNSFSLSPLHSNTKINGAHHSTVQGP) shows a compositional bias: polar residues. The interaction with target DNA stretch occupies residues 352–362 (FYSHSRLHHIS). Residues arginine 357, 423–427 (DMDCF), 509–515 (SCSYEAR), asparagine 521, and aspartate 569 each bind dCTP. One can recognise a UmuC domain in the interval 419–652 (IMHVDMDCFF…QLVTNLPGVG (234 aa)). Residue aspartate 423 coordinates Mg(2+). Mg(2+) contacts are provided by aspartate 569 and glutamate 570. 2 interaction with target DNA regions span residues 652–655 (GHSM) and 708–716 (RKSVSAEIN). A compositionally biased stretch (basic and acidic residues) spans 1034–1045 (AYDQRQRQDENS). 2 disordered regions span residues 1034-1101 (AYDQ…AKTL) and 1117-1146 (KHEG…LQSD). The segment covering 1046–1055 (THQQSASASV) has biased composition (polar residues). The span at 1069–1078 (EKKRNKKKKT) shows a compositional bias: basic residues. The Nuclear localization signal signature appears at 1071 to 1077 (KRNKKKK). Residues 1117 to 1128 (KHEGPPAEKPLE) are compositionally biased toward basic and acidic residues. Residues 1131 to 1145 (SASTSGVPGLSSLQS) show a composition bias toward polar residues. Residues 1151 to 1250 (VRPPAPNLAG…QTYGSTLKVT (100 aa)) form a protein interaction domain; mediates interaction with DNA polymerase zeta region.

This sequence belongs to the DNA polymerase type-Y family. As to quaternary structure, monomer. Interacts with the DNA polymerase zeta which is composed of REV3L and MAD2L2; the interaction with MAD2L2 is direct and requires that REV3L is in its closed conformation. Interacts with POLH, POLI and POLK. Interacts with FAAP20.

It localises to the nucleus. Its function is as follows. Deoxycytidyl transferase involved in DNA repair. Transfers a dCMP residue from dCTP to the 3'-end of a DNA primer in a template-dependent reaction. May assist in the first step in the bypass of abasic lesions by the insertion of a nucleotide opposite the lesion. Required for normal induction of mutations by physical and chemical agents. In Pongo abelii (Sumatran orangutan), this protein is DNA repair protein REV1 (REV1).